We begin with the raw amino-acid sequence, 72 residues long: KRAVQSEKARKHNASRRSMMRTFIKKVYAAIEAGDKAAAQKAFNEMQPIVDRQAAKGLIHKNKRARHKANLT.

This sequence belongs to the bacterial ribosomal protein bS20 family.

Functionally, binds directly to 16S ribosomal RNA. The sequence is that of Small ribosomal subunit protein bS20 (rpsT) from Klebsiella pneumoniae.